We begin with the raw amino-acid sequence, 175 residues long: Apoptosis regulator Bcl-2 homolog (175 aa).

A helical transmembrane segment spans residues 152 to 174 (YYVTRYFRVAAFIITSLAVINLF).

In terms of assembly, interacts with host BAK1 and BAX as well as other BH3-containing proteins including BIM, BID or PUMA.

It localises to the host membrane. Functionally, plays a role in the inhibition of host apoptosis. Interacts with host proapoptotic factors BAK1 and BAX to supposedly prevent their activation. The sequence is that of Apoptosis regulator Bcl-2 homolog (CNPV058) from Canarypox virus (CNPV).